Reading from the N-terminus, the 509-residue chain is Maturase K (509 aa).

It belongs to the intron maturase 2 family. MatK subfamily.

It is found in the plastid. The protein localises to the chloroplast. Functionally, usually encoded in the trnK tRNA gene intron. Probably assists in splicing its own and other chloroplast group II introns. This is Maturase K from Nicotiana glutinosa (Tobacco).